The following is a 350-amino-acid chain: GTPase Obg (350 aa).

Residues 1 to 159 form the Obg domain; the sequence is MRFIDQTEIF…FRLHLELKLL (159 aa). Residues 160–328 form the OBG-type G domain; it reads AEVGIIGLPN…LLQQVWEELD (169 aa). GTP-binding positions include 166–173, 191–195, 213–216, 280–283, and 309–311; these read GLPNAGKS, FTTLI, DIPG, NKID, and SAV. The Mg(2+) site is built by serine 173 and threonine 193.

It belongs to the TRAFAC class OBG-HflX-like GTPase superfamily. OBG GTPase family. As to quaternary structure, monomer. Mg(2+) is required as a cofactor.

It is found in the cytoplasm. In terms of biological role, an essential GTPase which binds GTP, GDP and possibly (p)ppGpp with moderate affinity, with high nucleotide exchange rates and a fairly low GTP hydrolysis rate. Plays a role in control of the cell cycle, stress response, ribosome biogenesis and in those bacteria that undergo differentiation, in morphogenesis control. In Acaryochloris marina (strain MBIC 11017), this protein is GTPase Obg.